The sequence spans 644 residues: DNA mismatch repair protein MutL (644 aa).

Residues 336–400 (ERPFEPSSPQ…EISRDSSLGE (65 aa)) are disordered. Basic and acidic residues predominate over residues 373–400 (SKTHSTWDEASRVDTSRAEISRDSSLGE).

The protein belongs to the DNA mismatch repair MutL/HexB family.

This protein is involved in the repair of mismatches in DNA. It is required for dam-dependent methyl-directed DNA mismatch repair. May act as a 'molecular matchmaker', a protein that promotes the formation of a stable complex between two or more DNA-binding proteins in an ATP-dependent manner without itself being part of a final effector complex. The polypeptide is DNA mismatch repair protein MutL (Shewanella sp. (strain MR-7)).